Consider the following 626-residue polypeptide: Fructose-1,6-bisphosphatase class 3 (626 aa).

The protein belongs to the FBPase class 3 family. It depends on Mn(2+) as a cofactor.

The enzyme catalyses beta-D-fructose 1,6-bisphosphate + H2O = beta-D-fructose 6-phosphate + phosphate. It participates in carbohydrate biosynthesis; gluconeogenesis. The protein is Fructose-1,6-bisphosphatase class 3 of Enterococcus faecalis (strain ATCC 700802 / V583).